A 238-amino-acid polypeptide reads, in one-letter code: Endothelin-3 (238 aa).

The signal sequence occupies residues 1-16; that stretch reads MEPGLWLLFGLTVTSA. A propeptide spanning residues 17-94 is cleaved from the precursor; sequence AGFVPCSQSG…AEGAPEHHRS (78 aa). A disordered region spans residues 24-89; that stretch reads QSGDAGRRGV…GQEQAAEGAP (66 aa). 2 disulfide bridges follow: Cys-97/Cys-111 and Cys-99/Cys-107. Residues 118-238 constitute a propeptide that is removed on maturation; sequence INTPEQTVPY…PRCLFQEGAP (121 aa). Residues 159–173 form an endothelin-like region; sequence CACVGRYDKACLHFC. The interval 183–219 is disordered; sequence SRTAEKTDKEEEGKVEVKDQQSKQALDLHHPKLMPGS. Over residues 185–212 the composition is skewed to basic and acidic residues; that stretch reads TAEKTDKEEEGKVEVKDQQSKQALDLHH.

It belongs to the endothelin/sarafotoxin family. As to expression, expressed in trophoblasts and placental stem villi vessels, but not in cultured placental smooth muscle cells.

It is found in the secreted. Functionally, endothelins are endothelium-derived vasoconstrictor peptides. This is Endothelin-3 (EDN3) from Homo sapiens (Human).